A 465-amino-acid chain; its full sequence is Cysteine--tRNA ligase (465 aa).

Position 30 (cysteine 30) interacts with Zn(2+). A 'HIGH' region motif is present at residues 32-42 (ITVYDYCHVGH). Residues cysteine 214, histidine 239, and glutamate 243 each coordinate Zn(2+). A 'KMSKS' region motif is present at residues 271–275 (KMSKS). Lysine 274 lines the ATP pocket.

The protein belongs to the class-I aminoacyl-tRNA synthetase family. Monomer. Zn(2+) serves as cofactor.

The protein resides in the cytoplasm. The catalysed reaction is tRNA(Cys) + L-cysteine + ATP = L-cysteinyl-tRNA(Cys) + AMP + diphosphate. This is Cysteine--tRNA ligase from Burkholderia cenocepacia (strain HI2424).